A 143-amino-acid chain; its full sequence is Synuclein (143 aa).

3 consecutive repeat copies span residues 20–30, 31–41, and 42–52. The interval 20 to 78 is 5 X 11 AA tandem repeats of [EGST]-K-T-K-[EQ]-[GQ]-[VA]-X(4); that stretch reads EKTKQGVQDAAEKTKQGVQDAAEKTKEGVMYVGTKTKEGVVQSVNTVTEKTKEQANVVG. The 4; approximate repeat unit spans residues 53–67; that stretch reads TKTKEGVVQSVNTVT. Repeat 5 spans residues 68-78; the sequence is EKTKEQANVVG. The interval 113-143 is disordered; sequence REIPAEQVAEGKQTTQEPLVEATEATEETGK.

This sequence belongs to the synuclein family. In terms of tissue distribution, nervous system tissue. Found in the electric lobe, the brain and the spinal cord.

The protein localises to the nucleus. Functionally, may have a role in synaptic regulation or signal transduction. In Tetronarce californica (Pacific electric ray), this protein is Synuclein.